Here is a 643-residue protein sequence, read N- to C-terminus: U3 small nucleolar RNA-associated protein 5 (643 aa).

WD repeat units lie at residues 14–54 (GQYL…LYLE), 55–98 (DSKL…VTYK), 186–225 (GHVS…TKCV), 227–266 (VAES…SSTK), 340–389 (SADR…LEQE), and 471–511 (RLKP…IHGG). The disordered stretch occupies residues 565–643 (HSSEPVVEED…EAGYSDVEME (79 aa)). Residues 570–611 (VVEEDEDDVEYNEELDDAGLIEDGEESYGSEEEEEGDSDNEE) are compositionally biased toward acidic residues. Basic and acidic residues predominate over residues 612 to 626 (EQKHTSSKQDGRLET). Positions 627–643 (EQSDGEEEAGYSDVEME) are enriched in acidic residues.

It belongs to the UTP5 family. Interacts with snoRNA U3. Interacts with MPP10. Component of the ribosomal small subunit (SSU) processome composed of at least 40 protein subunits and snoRNA U3. In the absence of snoRNA3, forms a complex with other t-UTPs. This complex can associate with pre-18S ribosomal RNAs.

Its subcellular location is the nucleus. It is found in the nucleolus. In terms of biological role, involved in nucleolar processing of pre-18S ribosomal RNA. Required for optimal pre-ribosomal RNA transcription by RNA polymerase I together with a subset of U3 proteins required for transcription (t-UTPs). This is U3 small nucleolar RNA-associated protein 5 (UTP5) from Saccharomyces cerevisiae (strain ATCC 204508 / S288c) (Baker's yeast).